The sequence spans 253 residues: Trypsin beta (253 aa).

Residues 1–22 form the signal peptide; the sequence is MLKFVILLSAVACALGGTIPEG. Residues 23–30 constitute a propeptide, activation peptide; it reads LLPQLDGR. The Peptidase S1 domain occupies 31-253; the sequence is IVGGTATTIS…DLRSWVINNA (223 aa). Residues C56 and C72 are joined by a disulfide bond. Residues H71 and D116 each act as charge relay system in the active site. 2 disulfides stabilise this stretch: C180–C197 and C206–C230. The active-site Charge relay system is S210.

This sequence belongs to the peptidase S1 family.

Its subcellular location is the secreted. It is found in the extracellular space. The catalysed reaction is Preferential cleavage: Arg-|-Xaa, Lys-|-Xaa.. The sequence is that of Trypsin beta (betaTry) from Drosophila erecta (Fruit fly).